Consider the following 99-residue polypeptide: Transcriptional regulator WhiB2 (99 aa).

The 4Fe-4S Wbl-type domain maps to 33–90 (LCAQTDPEAFFPEKGGSTRDAKRVCAKCEVREQCLKWAIDHDERFGIWGGMSERERRR). The [4Fe-4S] cluster site is built by Cys34, Cys57, Cys60, and Cys66.

Belongs to the WhiB family. It depends on [4Fe-4S] cluster as a cofactor. Post-translationally, the Fe-S cluster can be nitrosylated by nitric oxide (NO). Upon Fe-S cluster removal intramolecular disulfide bonds are formed.

The protein resides in the cytoplasm. In terms of biological role, acts as a transcriptional regulator. Probably redox-responsive. The apo- but not holo-form probably binds DNA. The polypeptide is Transcriptional regulator WhiB2 (whiB2) (Bifidobacterium longum (strain NCC 2705)).